We begin with the raw amino-acid sequence, 95 residues long: Small ribosomal subunit protein bS6 (95 aa).

Belongs to the bacterial ribosomal protein bS6 family.

Binds together with bS18 to 16S ribosomal RNA. The protein is Small ribosomal subunit protein bS6 of Clostridium kluyveri (strain NBRC 12016).